The sequence spans 176 residues: MIELTKKITDTVALEKIDPARLKTLSLPLDARIKSRQKVQLTSGEGVGLFLERGTLLRGGDVLTNADGVLVKVLAANETVSTIVCSDALMLTKVAYHLGNRHVPLQIETGFVRYQHDHVLDDMVRQLPGADTCVDVQVEQAPFEPEAGAYQQGGGHSHGHAHSHSHEKPHSHTHNH.

The interval 147–176 (AGAYQQGGGHSHGHAHSHSHEKPHSHTHNH) is disordered.

It belongs to the UreE family.

Its subcellular location is the cytoplasm. In terms of biological role, involved in urease metallocenter assembly. Binds nickel. Probably functions as a nickel donor during metallocenter assembly. This is Urease accessory protein UreE from Alcanivorax borkumensis (strain ATCC 700651 / DSM 11573 / NCIMB 13689 / SK2).